Here is a 165-residue protein sequence, read N- to C-terminus: Protein OPG091 (165 aa).

The protein belongs to the orthopoxvirus OPG091 family.

It is found in the virion. The protein resides in the host cytoplasm. Functionally, contributes to virulence in host but not to replication in cell culture. This chain is Protein OPG091 (OPG091), found in Cynomys gunnisoni (Gunnison's prairie dog).